The chain runs to 147 residues: Hemoglobin subunit beta (147 aa).

Position 2 is an N-acetylvaline (V2). The region spanning 3 to 147 (HLTPDEKAAV…VANALAHKYH (145 aa)) is the Globin domain. Phosphothreonine is present on T13. S45 carries the post-translational modification Phosphoserine. An N6-acetyllysine modification is found at K60. A heme b-binding site is contributed by H64. K83 bears the N6-acetyllysine mark. Residue H93 coordinates heme b. Position 94 is an S-nitrosocysteine (C94). Residue K145 is modified to N6-acetyllysine.

Belongs to the globin family. Heterotetramer of two alpha chains and two beta chains. Red blood cells.

In terms of biological role, involved in oxygen transport from the lung to the various peripheral tissues. This is Hemoglobin subunit beta (HBB) from Colobus polykomos (Western black-and-white colobus monkey).